The following is a 551-amino-acid chain: DNA double-strand break repair helicase HerA (551 aa).

Residues R152, 161-166 (GAGKSN), and 507-508 (RI) each bind ATP.

It belongs to the HerA family. Homohexamer. Interacts with NurA.

It carries out the reaction Couples ATP hydrolysis with the unwinding of duplex DNA at the replication fork by translocating in the 5'-3' direction. This creates two antiparallel DNA single strands (ssDNA). The leading ssDNA polymer is the template for DNA polymerase III holoenzyme which synthesizes a continuous strand.. It catalyses the reaction ATP + H2O = ADP + phosphate + H(+). The catalysed reaction is Couples ATP hydrolysis with the unwinding of duplex DNA by translocating in the 3'-5' direction.. Helicase activity is stimulated in the presence of NurA. Its function is as follows. Involved in DNA double-strand break (DSB) repair. Probably acts with NurA to stimulate resection of the 5' strand and produce the long 3' single-strand that is required for RadA loading. Has DNA-dependent ATPase activity and DNA helicase activity. This chain is DNA double-strand break repair helicase HerA, found in Pyrococcus furiosus (strain ATCC 43587 / DSM 3638 / JCM 8422 / Vc1).